Here is a 431-residue protein sequence, read N- to C-terminus: STE20-related kinase adapter protein alpha (431 aa).

A phosphoserine mark is found at Ser2 and Ser46. Positions 69–379 (YELLTVIGKG…ASTLLNHSFF (311 aa)) constitute a Protein kinase domain. The segment at 310-347 (LTMSPSRSVANSGLSDSLTTSTPRPSNGDSPSHPYHRT) is disordered. Positions 312–339 (MSPSRSVANSGLSDSLTTSTPRPSNGDS) are enriched in polar residues. A phosphothreonine; by LKB1 mark is found at Thr329 and Thr419.

Belongs to the protein kinase superfamily. STE Ser/Thr protein kinase family. STE20 subfamily. In terms of assembly, component of a trimeric complex composed of STK11/LKB1, STRAD (STRADA or STRADB) and CAB39/MO25 (CAB39/MO25alpha or CAB39L/MO25beta): the complex tethers STK11/LKB1 in the cytoplasm and stimulates its catalytic activity.

Its subcellular location is the nucleus. It localises to the cytoplasm. Its function is as follows. Pseudokinase which, in complex with CAB39/MO25 (CAB39/MO25alpha or CAB39L/MO25beta), binds to and activates STK11/LKB1. Adopts a closed conformation typical of active protein kinases and binds STK11/LKB1 as a pseudosubstrate, promoting conformational change of STK11/LKB1 in an active conformation. The sequence is that of STE20-related kinase adapter protein alpha (STRADA) from Homo sapiens (Human).